A 1039-amino-acid polypeptide reads, in one-letter code: uncharacterized protein (1039 aa).

This is an uncharacterized protein from Treponema pallidum (strain Nichols).